Reading from the N-terminus, the 283-residue chain is MKFGIVVNTNRPRAIAAGKELISWMRKEQIDFVLDANSAENLKESPSVEMENMHEQADFFVSLGGDGTLLGVSHFSNTKPIIGINLGRLGFLAEFCEHEMYDVIKRVLQNNFMLENRTQLEVSVSGKGQVRNFTGLNDVVIEKGTYPGVPVISVSIDNNLVSEYRADGVIIATSTGSTGYSLSAGGPIIIPKSKVFVVTPVCPHMLTVRPMVICDDKEIEVRVETPGDRFVLNCDGMLIQNISPSHQIRVRKAKNTVNLIANERRNYYNVLRQKFHWGKEQES.

Asp66 acts as the Proton acceptor in catalysis. Residues 66–67, 137–138, Arg165, Asp167, and 178–183 each bind NAD(+); these read DG, ND, and TGYSLS.

Belongs to the NAD kinase family. A divalent metal cation serves as cofactor.

The protein resides in the cytoplasm. It catalyses the reaction NAD(+) + ATP = ADP + NADP(+) + H(+). In terms of biological role, involved in the regulation of the intracellular balance of NAD and NADP, and is a key enzyme in the biosynthesis of NADP. Catalyzes specifically the phosphorylation on 2'-hydroxyl of the adenosine moiety of NAD to yield NADP. This Chloroherpeton thalassium (strain ATCC 35110 / GB-78) protein is NAD kinase.